The sequence spans 452 residues: Phosphoglucosamine mutase (452 aa).

Ser-98 (phosphoserine intermediate) is an active-site residue. Mg(2+) contacts are provided by Ser-98, Asp-239, Asp-241, and Asp-243. At Ser-98 the chain carries Phosphoserine.

This sequence belongs to the phosphohexose mutase family. It depends on Mg(2+) as a cofactor. Activated by phosphorylation.

The enzyme catalyses alpha-D-glucosamine 1-phosphate = D-glucosamine 6-phosphate. In terms of biological role, catalyzes the conversion of glucosamine-6-phosphate to glucosamine-1-phosphate. The chain is Phosphoglucosamine mutase from Anaplasma marginale (strain St. Maries).